We begin with the raw amino-acid sequence, 309 residues long: Golgi-associated RAB2 interactor protein 1A (309 aa).

Phosphoserine occurs at positions 231, 263, and 267.

This sequence belongs to the GARIN family. As to quaternary structure, interacts (via N-terminus) with RAB2B (in GTP-bound form).

The protein localises to the golgi apparatus. RAB2B effector protein required for accurate acrosome formation and normal male fertility. This is Golgi-associated RAB2 interactor protein 1A from Homo sapiens (Human).